The following is a 370-amino-acid chain: Dual-specificity RNA methyltransferase RlmN (370 aa).

E93 (proton acceptor) is an active-site residue. One can recognise a Radical SAM core domain in the interval 99–337; that stretch reads EEGRGTLCVS…VTTVRKTRGD (239 aa). A disulfide bond links C106 and C343. Residues C113, C117, and C120 each contribute to the [4Fe-4S] cluster site. S-adenosyl-L-methionine is bound by residues 167–168, S199, 221–223, and N300; these read GE and SLH. C343 functions as the S-methylcysteine intermediate in the catalytic mechanism.

Belongs to the radical SAM superfamily. RlmN family. [4Fe-4S] cluster is required as a cofactor.

It is found in the cytoplasm. The enzyme catalyses adenosine(2503) in 23S rRNA + 2 reduced [2Fe-2S]-[ferredoxin] + 2 S-adenosyl-L-methionine = 2-methyladenosine(2503) in 23S rRNA + 5'-deoxyadenosine + L-methionine + 2 oxidized [2Fe-2S]-[ferredoxin] + S-adenosyl-L-homocysteine. It carries out the reaction adenosine(37) in tRNA + 2 reduced [2Fe-2S]-[ferredoxin] + 2 S-adenosyl-L-methionine = 2-methyladenosine(37) in tRNA + 5'-deoxyadenosine + L-methionine + 2 oxidized [2Fe-2S]-[ferredoxin] + S-adenosyl-L-homocysteine. In terms of biological role, specifically methylates position 2 of adenine 2503 in 23S rRNA and position 2 of adenine 37 in tRNAs. m2A2503 modification seems to play a crucial role in the proofreading step occurring at the peptidyl transferase center and thus would serve to optimize ribosomal fidelity. This Francisella tularensis subsp. holarctica (strain FTNF002-00 / FTA) protein is Dual-specificity RNA methyltransferase RlmN.